A 230-amino-acid chain; its full sequence is uncharacterized protein (230 aa).

The first 21 residues, 1 to 21, serve as a signal peptide directing secretion; it reads MARYDARLRGIGKAHACSAFA. Positions 47 to 190 are disordered; that stretch reads SASVQENFIA…TVQTSSSGDP (144 aa). Residues 141-150 show a composition bias toward polar residues; that stretch reads PQSQTSANSQ. Residues 151-165 show a composition bias toward basic and acidic residues; it reads KKPEIRCRERSKNAR. Residues 173 to 188 are compositionally biased toward polar residues; the sequence is AVATNEAETVQTSSSG.

To R.meliloti RA0936 and y4aO.

This is an uncharacterized protein from Sinorhizobium fredii (strain NBRC 101917 / NGR234).